The primary structure comprises 459 residues: UNC93-like protein 1 (459 aa).

A disordered region spans residues 1-26 (MNVRDEGKTTAEKHGGGEENKSPENK). 11 helical membrane-spanning segments follow: residues 38–58 (LMGF…GMGG), 73–93 (AVYT…NVLG), 96–116 (LTLA…LYYN), 122–142 (AFAI…WAGE), 159–179 (IALF…IPFI), 195–215 (YIAF…ILPA), 251–271 (LLIV…FNNV), 287–307 (FYWG…DFSF), 314–334 (GFTG…GGLA), 355–375 (GIEF…DAMY), and 425–445 (LIVN…LVYF).

Belongs to the unc-93 family.

It localises to the membrane. The chain is UNC93-like protein 1 from Arabidopsis thaliana (Mouse-ear cress).